The chain runs to 149 residues: MATKLDYEDAVFYFVDDDKICSRDSIIDLIDEYITWRNHVIVFNKDITSCGRLYKELMKFDDVAIRYYGIDKINEIVEAMSEGDHYINFTKVHDQESLFATIGICAKITEHWGYKKISESRFQSLGNITDLMTDDNINILILFLEKKLN.

Belongs to the orthopoxvirus OPG044 family. In terms of assembly, interacts with DDX3; this interaction inhibits DDX3 and suppresses DDX3-mediated IFN-beta promoter induction. Interacts with TRAF6 and IRAK2; these interactions suppress TLR-dependent NF-KappaB activation.

It is found in the host cytoplasm. In terms of biological role, virulence factor that affects the acute immune response to infection. Bcl-2-like protein which, through its interaction with the DEAD box RNA helicase DDX3X/DDX3, prevents TBK1/IKKepsilon-mediated IRF3 activation. Contributes to virulence by binding to the host TRAF6 and IRAK2 and preventing host NF-kappa-B activation. The polypeptide is Protein K7 (OPG044) (Homo sapiens (Human)).